The sequence spans 255 residues: MFKVRVIPCLDVKDGRVVKGVNFVDLRDAGDPVEAAIAYDAAGADELCFLDITATHENRGIMLDVVRRTAEACFMPVTVGGGVRTVDDIKTLLRSGADKVSINSAAVARREFVKEAAEKFGDQCIVVAIDAKRVPGRDRWEIFTHGGRKGTGIDAIEFAQEVVSLGAGEILLTSMDRDGTKSGFDIPLTRAIADSVGVPVIASGGVGNLDHLVDGIREGHATAVLAASIFHFGEYTIRQAKDHMVQAGLPMRLDP.

Catalysis depends on residues Asp-11 and Asp-130.

The protein belongs to the HisA/HisF family. Heterodimer of HisH and HisF.

It localises to the cytoplasm. The catalysed reaction is 5-[(5-phospho-1-deoxy-D-ribulos-1-ylimino)methylamino]-1-(5-phospho-beta-D-ribosyl)imidazole-4-carboxamide + L-glutamine = D-erythro-1-(imidazol-4-yl)glycerol 3-phosphate + 5-amino-1-(5-phospho-beta-D-ribosyl)imidazole-4-carboxamide + L-glutamate + H(+). Its pathway is amino-acid biosynthesis; L-histidine biosynthesis; L-histidine from 5-phospho-alpha-D-ribose 1-diphosphate: step 5/9. Its function is as follows. IGPS catalyzes the conversion of PRFAR and glutamine to IGP, AICAR and glutamate. The HisF subunit catalyzes the cyclization activity that produces IGP and AICAR from PRFAR using the ammonia provided by the HisH subunit. This chain is Imidazole glycerol phosphate synthase subunit HisF, found in Rhodopseudomonas palustris (strain ATCC BAA-98 / CGA009).